Here is a 135-residue protein sequence, read N- to C-terminus: Sex-regulated protein janus-A (135 aa).

Lys37 is a substrate binding site. The active-site Proton acceptor is His63. Residue 104 to 106 (SQG) coordinates substrate.

The protein belongs to the janus family.

In terms of biological role, janA and janB regulate somatic sex differentiation. The protein is Sex-regulated protein janus-A (janA) of Drosophila orena (Fruit fly).